Reading from the N-terminus, the 335-residue chain is MLSYAPENAYQRLSTMENKKVFPKEKSGLHPRNRHRSRYDFDALSVSCPELIPFLAPTAYGDISIDFASPLAVKMLNKALLKHFYGIEYWDIPADFLCPPIPGRADYVHHLADLLASCNDGVIPQGKNVAVLDIGVGANCIYPIIGQREYGWRFTGTDIDPQALSAAKMVVSMNPTLKNTLRLKQQKNPQAIFDGILAVNERYDATLCNPPFHGSAEEAAATTRRKLHKLGKSEVAAKPVQNFGGKNSELWCEGGEEGFVSRMVAESATKAQNCFWFTSLISKKTTLPAIYHALRYANAVEVRTIDMAQGQKVSRFVAWTFLTPEQQAAWKAERW.

The protein belongs to the methyltransferase superfamily. METTL16/RlmF family.

The protein resides in the cytoplasm. The enzyme catalyses adenosine(1618) in 23S rRNA + S-adenosyl-L-methionine = N(6)-methyladenosine(1618) in 23S rRNA + S-adenosyl-L-homocysteine + H(+). Specifically methylates the adenine in position 1618 of 23S rRNA. This chain is Ribosomal RNA large subunit methyltransferase F, found in Yersinia enterocolitica serotype O:8 / biotype 1B (strain NCTC 13174 / 8081).